Consider the following 235-residue polypeptide: (5-formylfuran-3-yl)methyl phosphate synthase (235 aa).

Residue Lys27 is the Schiff-base intermediate with substrate of the active site. Lys85 functions as the Proton acceptor in the catalytic mechanism.

The protein belongs to the MfnB family.

It catalyses the reaction 2 D-glyceraldehyde 3-phosphate = 4-(hydroxymethyl)-2-furancarboxaldehyde phosphate + phosphate + 2 H2O. Its pathway is cofactor biosynthesis; methanofuran biosynthesis. Catalyzes the formation of 4-(hydroxymethyl)-2-furancarboxaldehyde phosphate (4-HFC-P) from two molecules of glyceraldehyde-3-P (GA-3-P). The chain is (5-formylfuran-3-yl)methyl phosphate synthase from Methanococcus aeolicus (strain ATCC BAA-1280 / DSM 17508 / OCM 812 / Nankai-3).